The chain runs to 459 residues: Argininosuccinate lyase (459 aa).

It belongs to the lyase 1 family. Argininosuccinate lyase subfamily.

It is found in the cytoplasm. It catalyses the reaction 2-(N(omega)-L-arginino)succinate = fumarate + L-arginine. It functions in the pathway amino-acid biosynthesis; L-arginine biosynthesis; L-arginine from L-ornithine and carbamoyl phosphate: step 3/3. The chain is Argininosuccinate lyase from Geobacillus sp. (strain WCH70).